The following is a 606-amino-acid chain: Diphthine--ammonia ligase (606 aa).

It in the N-terminal section; belongs to the Diphthine--ammonia ligase family. This sequence in the C-terminal section; belongs to the RutC family.

The protein localises to the cytoplasm. The protein resides in the nucleus. It catalyses the reaction diphthine-[translation elongation factor 2] + NH4(+) + ATP = diphthamide-[translation elongation factor 2] + AMP + diphosphate + H(+). It functions in the pathway protein modification; peptidyl-diphthamide biosynthesis. In terms of biological role, amidase that catalyzes the last step of diphthamide biosynthesis using ammonium and ATP. Diphthamide biosynthesis consists in the conversion of an L-histidine residue in the translation elongation factor eEF-2 (eft201 or eft202) to diphthamide. Has a role in meiosis. The chain is Diphthine--ammonia ligase (mug71) from Schizosaccharomyces pombe (strain 972 / ATCC 24843) (Fission yeast).